A 474-amino-acid chain; its full sequence is Glutamate--tRNA ligase (474 aa).

The short motif at 9 to 19 is the 'HIGH' region element; sequence PSPTGYLHVGG. The 'KMSKS' region signature appears at 240–244; it reads KLSKR. K243 provides a ligand contact to ATP.

The protein belongs to the class-I aminoacyl-tRNA synthetase family. Glutamate--tRNA ligase type 1 subfamily. As to quaternary structure, monomer.

It localises to the cytoplasm. The enzyme catalyses tRNA(Glu) + L-glutamate + ATP = L-glutamyl-tRNA(Glu) + AMP + diphosphate. Catalyzes the attachment of glutamate to tRNA(Glu) in a two-step reaction: glutamate is first activated by ATP to form Glu-AMP and then transferred to the acceptor end of tRNA(Glu). In Vibrio vulnificus (strain YJ016), this protein is Glutamate--tRNA ligase.